The sequence spans 256 residues: Undecaprenyl-diphosphatase (256 aa).

A run of 7 helical transmembrane segments spans residues 1-21, 41-61, 69-89, 96-116, 172-192, 207-227, and 233-253; these read MDIF…FLPV, FHKT…LALF, VDIW…GFLL, LFAP…FLVL, VAAE…TGYD, ALGV…KGFL, and FNFV…LFYL.

Belongs to the UppP family.

Its subcellular location is the cell inner membrane. The enzyme catalyses di-trans,octa-cis-undecaprenyl diphosphate + H2O = di-trans,octa-cis-undecaprenyl phosphate + phosphate + H(+). In terms of biological role, catalyzes the dephosphorylation of undecaprenyl diphosphate (UPP). Confers resistance to bacitracin. The protein is Undecaprenyl-diphosphatase of Wolinella succinogenes (strain ATCC 29543 / DSM 1740 / CCUG 13145 / JCM 31913 / LMG 7466 / NCTC 11488 / FDC 602W) (Vibrio succinogenes).